The chain runs to 113 residues: Protein CTLA-2-beta (113 aa).

Tandem repeats lie at residues 15 to 17 (EWK) and 18 to 20 (EWK). Residues 15–20 (EWKEWK) are 2 X 3 AA tandem repeats of E-W-K.

To the propeptide regions of cysteine proteases.

Its function is as follows. Not known, expressed in activated T-cell. This chain is Protein CTLA-2-beta (Ctla2b), found in Mus musculus (Mouse).